A 165-amino-acid chain; its full sequence is Cyclic pyranopterin monophosphate synthase (165 aa).

Substrate contacts are provided by residues 76 to 78 (MCH) and 113 to 114 (IE). Residue Asp128 is part of the active site.

Belongs to the MoaC family. Homohexamer; trimer of dimers.

The catalysed reaction is (8S)-3',8-cyclo-7,8-dihydroguanosine 5'-triphosphate = cyclic pyranopterin phosphate + diphosphate. Its pathway is cofactor biosynthesis; molybdopterin biosynthesis. Catalyzes the conversion of (8S)-3',8-cyclo-7,8-dihydroguanosine 5'-triphosphate to cyclic pyranopterin monophosphate (cPMP). In Limosilactobacillus fermentum (strain NBRC 3956 / LMG 18251) (Lactobacillus fermentum), this protein is Cyclic pyranopterin monophosphate synthase.